We begin with the raw amino-acid sequence, 208 residues long: Small ribosomal subunit protein eS1 (208 aa).

The protein belongs to the eukaryotic ribosomal protein eS1 family.

The sequence is that of Small ribosomal subunit protein eS1 from Saccharolobus solfataricus (strain ATCC 35092 / DSM 1617 / JCM 11322 / P2) (Sulfolobus solfataricus).